We begin with the raw amino-acid sequence, 187 residues long: Elongation factor P (187 aa).

This sequence belongs to the elongation factor P family.

It is found in the cytoplasm. Its pathway is protein biosynthesis; polypeptide chain elongation. Functionally, involved in peptide bond synthesis. Stimulates efficient translation and peptide-bond synthesis on native or reconstituted 70S ribosomes in vitro. Probably functions indirectly by altering the affinity of the ribosome for aminoacyl-tRNA, thus increasing their reactivity as acceptors for peptidyl transferase. The sequence is that of Elongation factor P from Nocardia farcinica (strain IFM 10152).